Consider the following 599-residue polypeptide: Transcription factor COE4 (599 aa).

Positions 64–67 (RKSN) are interaction with DNA. The C5-type zinc-finger motif lies at 152-171 (CRVLLTHEIMCSRCCDRKSC). Interaction with DNA regions lie at residues 198 to 205 (NCLKNAGN) and 237 to 240 (NNSK). Residues 256-339 (PCIKAISPGE…KGAPGRFVYT (84 aa)) enclose the IPT/TIG domain. Disordered regions lie at residues 449–473 (GYAR…SSYG) and 556–586 (VLRP…TDKF). The segment covering 464–473 (SPGSQQSSYG) has biased composition (low complexity).

This sequence belongs to the COE family. Forms either a homodimer or a heterodimer with a related family member. Expressed in the olfactory epithelium, including in both neuronal and basal cell layers. Absent in the vomeronasal organ. Absent from NK cells and CD8(+) T cells.

Its subcellular location is the nucleus. Its function is as follows. Transcription factor. Positively modulates transcription, perhaps less strongly than other early B cell factor/EBF family proteins. Binds an EBF1/Olf-1 consensus site in vitro. The sequence is that of Transcription factor COE4 (Ebf4) from Mus musculus (Mouse).